The chain runs to 402 residues: Nicotinate phosphoribosyltransferase (402 aa).

His-224 carries the post-translational modification Phosphohistidine; by autocatalysis.

This sequence belongs to the NAPRTase family. Transiently phosphorylated on a His residue during the reaction cycle. Phosphorylation strongly increases the affinity for substrates and increases the rate of nicotinate D-ribonucleotide production. Dephosphorylation regenerates the low-affinity form of the enzyme, leading to product release.

It carries out the reaction nicotinate + 5-phospho-alpha-D-ribose 1-diphosphate + ATP + H2O = nicotinate beta-D-ribonucleotide + ADP + phosphate + diphosphate. It functions in the pathway cofactor biosynthesis; NAD(+) biosynthesis; nicotinate D-ribonucleotide from nicotinate: step 1/1. Catalyzes the synthesis of beta-nicotinate D-ribonucleotide from nicotinate and 5-phospho-D-ribose 1-phosphate at the expense of ATP. This is Nicotinate phosphoribosyltransferase from Neisseria gonorrhoeae (strain ATCC 700825 / FA 1090).